Reading from the N-terminus, the 295-residue chain is Putative aquaporin-12A (295 aa).

A helical transmembrane segment spans residues 1-21 (MAGLNVSLSFFFATFALCEAA). Residues 22-54 (RRASKALLPVGAYEVFAREAMRTLVELGPWAGD) lie on the Extracellular side of the membrane. Residues 55 to 75 (FGPDLLLTLLFLLFLAHGVTL) traverse the membrane as a helical segment. The Cytoplasmic portion of the chain corresponds to 76 to 99 (DGASANPTVSLQEFLMAEQSLPGT). The discontinuously helical intramembrane region spans 77 to 114 (GASANPTVSLQEFLMAEQSLPGTLLKLAAQGLGMQAAC). Residues 81–83 (NPT) carry the NPA 1 motif. Residues 100–126 (LLKLAAQGLGMQAACTLMRLCWAWELS) form a helical membrane-spanning segment. The Extracellular segment spans residues 127–145 (DLHLLQSLMAQSCSSALRT). Residues 146-166 (SVPHGALVEAACAFCFHLTLL) traverse the membrane as a helical segment. Residues 167–178 (HLRHSPPAYSGP) are Cytoplasmic-facing. A helical membrane pass occupies residues 179–199 (AVALLVTVTAYTAGPFTSAFF). The discontinuously helical intramembrane region spans 195–206 (TSAFFNPALAAS). The short motif at 200–202 (NPA) is the NPA 2 element. The Extracellular portion of the chain corresponds to 200–215 (NPALAASVTFACSGHT). Residues 216–236 (LLEYVQVYWLGPLTGMVLAVL) form a helical membrane-spanning segment. Over 237–295 (LHQGRLPHLFQRNLFYGQKNKYRAPRGKPAPASGDTQTPAKGSSVREPGRSGVEGPHSS) the chain is Cytoplasmic. The interval 257-295 (KYRAPRGKPAPASGDTQTPAKGSSVREPGRSGVEGPHSS) is disordered.

It belongs to the MIP/aquaporin (TC 1.A.8) family. AQP11/AQP12 subfamily. Homotetramer; each monomer provides an independent water pore. Restricted to the pancreas.

Its subcellular location is the membrane. The enzyme catalyses H2O(in) = H2O(out). In terms of biological role, putative aquaporin. Could form homotetrameric transmembrane channels, with each monomer independently mediating water transport across the plasma membrane along its osmotic gradient. The chain is Putative aquaporin-12A from Homo sapiens (Human).